A 100-amino-acid polypeptide reads, in one-letter code: MHHIGYEVLQETFVLIRNVFSYSNQGEYSVTYVREIADALYNIPHSIQKQHDTFLEFEFKLLEETLMQMEFGKVAAQNIPHFRMYAARVQQLLRKRYKEV.

This is an uncharacterized protein from Bacillus anthracis.